The sequence spans 545 residues: MLTLGGERTSGESVRKQNVLAACSFANFVKTSLGPVGLDKMLVDDVGDVTITNDGATILKLLDVEHPAAKILVQLAQLQDEEVGDGTTSVVILAAALLKNADELISRFVHPTTVINGYRLACREACKYIQEHMAYDVNKLGKAGLINVARTAMSSKLINLDADMFSQMAVDALMAVEVSGGPKGPVYPIKAVNILKAHGRSMSESMLIDGYALNCTAASQQMPRIIKKAKIAFLDFSLQKVKMKLGVQVVVKDPAQLEAIRQREADITKERIQKILNAGANVILTTGGIDDLCMKYFVEVNAMAVRRCKKVDLKNMAKATGGQLIVSLADMEGDEVFDPTKLGNAEEVSQERICDDELIILRGPKVHPSASIILRGANDFYVDEMERSLHDALLVVKRVLESKRIVPGAGACETAVSIYLENYALTLSSREQLAIAEFARAMLSIPKQLAVNAGVDSTELVARLRSCHNSSQSKPDQAHNKWWGLDLNNQYVADCKEIGVFEPLVSKIKSLKFATEAAITILRIDDLIKLKEEKQPDHDGDECGY.

It belongs to the TCP-1 chaperonin family. Heterooligomeric complex of about 850 to 900 kDa that forms two stacked rings, 12 to 16 nm in diameter.

It is found in the cytoplasm. Functionally, molecular chaperone; assists the folding of proteins upon ATP hydrolysis. Known to play a role, in vitro, in the folding of actin and tubulin. This Schistosoma mansoni (Blood fluke) protein is T-complex protein 1 subunit alpha (TCP-1A).